A 562-amino-acid polypeptide reads, in one-letter code: Phosphatidylinositol 4-phosphate 5-kinase type-1 alpha (562 aa).

The PIPK domain maps to 81–449 (TSSALKGAIQ…RFQRFMCNTV (369 aa)). Lys103 is covalently cross-linked (Glycyl lysine isopeptide (Lys-Gly) (interchain with G-Cter in ubiquitin)). Phosphoserine is present on Ser486. Residues 506-526 (HLGRPDVLPQTPPLEEISEGS) form a disordered region.

Interacts with RAC1. Interacts with TUT1. Forms a complex with CDH1/E-cadherin, CTNNB1/beta-catenin and CTNND1 at the plasma membrane upon calcium stimulation. Found in a ternary complex with IRS1 and DGKZ in the absence of insulin stimulation. Interacts with DGKZ. Interacts with PIP4K2C; the interaction inhibits PIP5K1A kinase activity. As to expression, highly expressed in heart, placenta, skeletal muscle, kidney and pancreas. Detected at lower levels in brain, lung and liver.

The protein localises to the cell membrane. Its subcellular location is the cytoplasm. It is found in the nucleus. The protein resides in the nucleus speckle. It localises to the cell projection. The protein localises to the ruffle. Its subcellular location is the lamellipodium. The catalysed reaction is a 1,2-diacyl-sn-glycero-3-phospho-(1D-myo-inositol 4-phosphate) + ATP = a 1,2-diacyl-sn-glycero-3-phospho-(1D-myo-inositol-4,5-bisphosphate) + ADP + H(+). It catalyses the reaction 1-octadecanoyl-2-(5Z,8Z,11Z,14Z)-eicosatetraenoyl-sn-glycero-3-phospho-1D-myo-inositol 4-phosphate + ATP = 1-octadecanoyl-2-(5Z,8Z,11Z,14Z)-eicosatetraenoyl-sn-glycero-3-phospho-1D-myo-inositol 4,5-bisphosphate + ADP + H(+). It carries out the reaction 1,2-dihexadecanoyl-sn-glycero-3-phospho-(1D-myo-inositol-4-phosphate) + ATP = 1,2-dihexadecanoyl-sn-glycero-3-phospho-(1D-myo-inositol-4,5-bisphosphate) + ADP + H(+). The enzyme catalyses 1-octadecanoyl-2-(9Z)-octadecenoyl-sn-glycero-3-phospho-1D-myo-inositol 4-phosphate + ATP = 1-octadecanoyl-2-(9Z)-octadecenoyl-sn-glycero-3-phospho-1D-myo-inositol 4,5-bisphosphate + ADP + H(+). The catalysed reaction is 1-octadecanoyl-2-(9Z)-octadecenoyl-sn-glycero-3-phospho-1D-myo-inositol + ATP = 1-octadecanoyl-2-(9Z)-octadecenoyl-sn-glycero-3-phospho-1D-myo-inositol 5-phosphate + ADP + H(+). It catalyses the reaction 1-octadecanoyl-2-(9Z,12Z)-octadecadienoyl-sn-glycero-3-phospho-1D-myo-inositol + ATP = 1-octadecanoyl-2-(9Z,12Z)-octadecadienoyl-sn-glycero-3-phospho-1D-myo-inositol 5-phosphate + ADP + H(+). It carries out the reaction 1-octadecanoyl-2-(5Z,8Z,11Z,14Z-eicosatetraenoyl)-sn-glycero-3-phospho-(1D-myo-inositol) + ATP = 1-octadecanoyl-2-(5Z,8Z,11Z,14Z)-eicosatetraenoyl-sn-glycero-3-phospho-1D-myo-inositol 5-phosphate + ADP + H(+). The enzyme catalyses 1,2-di-(9Z,12Z)-octadecadienoyl-sn-glycero-3-phospho-1D-myo-inositol + ATP = 1,2-di(9Z,12Z)-octadecadienoyl-sn-glycero-3-phospho-1D-myo-inositol 5-phosphate + ADP + H(+). Its activity is regulated as follows. Activated by diarachidonoyl phosphatidic acid (DAPA), when 1,2-dipalmitoyl-PI4P is used as a substrate. Its function is as follows. Catalyzes the phosphorylation of phosphatidylinositol 4-phosphate (PtdIns(4)P/PI4P) to form phosphatidylinositol 4,5-bisphosphate (PtdIns(4,5)P2/PIP2), a lipid second messenger that regulates several cellular processes such as signal transduction, vesicle trafficking, actin cytoskeleton dynamics, cell adhesion, and cell motility. PtdIns(4,5)P2 can directly act as a second messenger or can be utilized as a precursor to generate other second messengers: inositol 1,4,5-trisphosphate (IP3), diacylglycerol (DAG) or phosphatidylinositol-3,4,5-trisphosphate (PtdIns(3,4,5)P3/PIP3). PIP5K1A-mediated phosphorylation of PtdIns(4)P is the predominant pathway for PtdIns(4,5)P2 synthesis. Can also use phosphatidylinositol (PtdIns) as substrate in vitro. Together with PIP5K1C, is required for phagocytosis, both enzymes regulating different types of actin remodeling at sequential steps. Promotes particle ingestion by activating the WAS GTPase-binding protein that induces Arp2/3 dependent actin polymerization at the nascent phagocytic cup. Together with PIP5K1B, is required, after stimulation by G-protein coupled receptors, for the synthesis of IP3 that will induce stable platelet adhesion. Recruited to the plasma membrane by the E-cadherin/beta-catenin complex where it provides the substrate PtdIns(4,5)P2 for the production of PtdIns(3,4,5)P3, IP3 and DAG, that will mobilize internal calcium and drive keratinocyte differentiation. Positively regulates insulin-induced translocation of SLC2A4 to the cell membrane in adipocytes. Together with PIP5K1C has a role during embryogenesis. Independently of its catalytic activity, is required for membrane ruffling formation, actin organization and focal adhesion formation during directional cell migration by controlling integrin-induced translocation of the small GTPase RAC1 to the plasma membrane. Also functions in the nucleus where it acts as an activator of TUT1 adenylyltransferase activity in nuclear speckles, thereby regulating mRNA polyadenylation of a select set of mRNAs. This Homo sapiens (Human) protein is Phosphatidylinositol 4-phosphate 5-kinase type-1 alpha.